A 301-amino-acid chain; its full sequence is UDP-N-acetylenolpyruvoylglucosamine reductase (301 aa).

One can recognise an FAD-binding PCMH-type domain in the interval 26–193 (KTGGPAQYLA…VSATFGLEPG (168 aa)). Residue Arg-172 is part of the active site. The active-site Proton donor is the Ser-222. Residue Glu-292 is part of the active site.

The protein belongs to the MurB family. It depends on FAD as a cofactor.

The protein resides in the cytoplasm. It catalyses the reaction UDP-N-acetyl-alpha-D-muramate + NADP(+) = UDP-N-acetyl-3-O-(1-carboxyvinyl)-alpha-D-glucosamine + NADPH + H(+). Its pathway is cell wall biogenesis; peptidoglycan biosynthesis. In terms of biological role, cell wall formation. The polypeptide is UDP-N-acetylenolpyruvoylglucosamine reductase (Lactobacillus johnsonii (strain CNCM I-12250 / La1 / NCC 533)).